Consider the following 396-residue polypeptide: 1-deoxy-D-xylulose 5-phosphate reductoisomerase (396 aa).

5 residues coordinate NADPH: Thr-13, Gly-14, Ser-15, Ile-16, and Asn-127. Lys-128 is a binding site for 1-deoxy-D-xylulose 5-phosphate. An NADPH-binding site is contributed by Glu-129. Asp-153 provides a ligand contact to Mn(2+). The 1-deoxy-D-xylulose 5-phosphate site is built by Ser-154, Glu-155, Ser-184, and His-207. Residue Glu-155 participates in Mn(2+) binding. Gly-213 is an NADPH binding site. 1-deoxy-D-xylulose 5-phosphate contacts are provided by Ser-220, Asn-225, Lys-226, and Glu-229. Residue Glu-229 coordinates Mn(2+).

This sequence belongs to the DXR family. Requires Mg(2+) as cofactor. Mn(2+) is required as a cofactor.

It catalyses the reaction 2-C-methyl-D-erythritol 4-phosphate + NADP(+) = 1-deoxy-D-xylulose 5-phosphate + NADPH + H(+). Its pathway is isoprenoid biosynthesis; isopentenyl diphosphate biosynthesis via DXP pathway; isopentenyl diphosphate from 1-deoxy-D-xylulose 5-phosphate: step 1/6. In terms of biological role, catalyzes the NADPH-dependent rearrangement and reduction of 1-deoxy-D-xylulose-5-phosphate (DXP) to 2-C-methyl-D-erythritol 4-phosphate (MEP). This is 1-deoxy-D-xylulose 5-phosphate reductoisomerase from Pseudomonas paraeruginosa (strain DSM 24068 / PA7) (Pseudomonas aeruginosa (strain PA7)).